Reading from the N-terminus, the 440-residue chain is MESQQLSNYPHISHGSACASVTSKEVHTNQDPLDVSASKIQEYDKASTKANSQQTTTPASSAVPENPHHASPQPASVPPPQNGPYPQQCMMTQNQANPSGWSFYGHPSMIPYTPYQMSPMYFPPGPQSQFPQYPSSVGTPLSTPSPESGNTFTDSSSADSDMTSTKKYVRPPPMLTSPNDFPNWVKTYIKFLQNSNLGGIIPTVNGKPVRPITDDELTFLYNAFQIFAPSQFLPTWVKDILSVDYTDIMKILSKSIEKMQSDTQEANDIVTLANLQYNGSTPADAFETKVTNIIDRLNNNGIHINNKVACQLIMRGLSGEYKFLRYTRHRHLNMTVAELFLDIHAIYEEQQGSRNSKPNYRRNPSDEKNDSRSYTNTTKPKVIARNPQKTNNSKSKTARAHNVSTSNNSPSTDNDSISKSTTEPIQLNNKHDLHLRPETY.

3 stretches are compositionally biased toward polar residues: residues 1 to 10 (MESQQLSNYP), 48 to 60 (TKAN…TPAS), and 127 to 152 (QSQF…GNTF). Disordered regions lie at residues 1–93 (MESQ…MMTQ), 126–173 (PQSQ…RPPP), and 352–440 (GSRN…PETY). Over residues 153–165 (TDSSSADSDMTST) the composition is skewed to low complexity. An RNA-binding region spans residues 299–401 (NNGIHINNKV…NSKSKTARAH (103 aa)). Over residues 402-418 (NVSTSNNSPSTDNDSIS) the composition is skewed to low complexity. Ser416 carries the phosphoserine modification. Over residues 419–428 (KSTTEPIQLN) the composition is skewed to polar residues. Over residues 429–440 (NKHDLHLRPETY) the composition is skewed to basic and acidic residues.

In terms of assembly, homotrimer.

Its subcellular location is the cytoplasm. Its function is as follows. Capsid protein (CA) is the structural component of the virus-like particle (VLP), forming the shell that encapsulates the retrotransposons dimeric RNA genome. The particles are assembled from trimer-clustered units and there are holes in the capsid shells that allow for the diffusion of macromolecules. CA also has nucleocapsid-like chaperone activity, promoting primer tRNA(i)-Met annealing to the multipartite primer-binding site (PBS), dimerization of Ty1 RNA and initiation of reverse transcription. This is Transposon Ty1-BR Gag polyprotein (TY1A-BR) from Saccharomyces cerevisiae (strain ATCC 204508 / S288c) (Baker's yeast).